We begin with the raw amino-acid sequence, 124 residues long: Small ribosomal subunit protein uS12 (124 aa).

The tract at residues 9 to 28 (KSERTVQKNQTKSPALDSCP) is disordered. At D89 the chain carries 3-methylthioaspartic acid.

This sequence belongs to the universal ribosomal protein uS12 family. As to quaternary structure, part of the 30S ribosomal subunit. Contacts proteins S8 and S17. May interact with IF1 in the 30S initiation complex.

In terms of biological role, with S4 and S5 plays an important role in translational accuracy. Interacts with and stabilizes bases of the 16S rRNA that are involved in tRNA selection in the A site and with the mRNA backbone. Located at the interface of the 30S and 50S subunits, it traverses the body of the 30S subunit contacting proteins on the other side and probably holding the rRNA structure together. The combined cluster of proteins S8, S12 and S17 appears to hold together the shoulder and platform of the 30S subunit. The chain is Small ribosomal subunit protein uS12 from Bdellovibrio bacteriovorus (strain ATCC 15356 / DSM 50701 / NCIMB 9529 / HD100).